A 129-amino-acid chain; its full sequence is Follitropin subunit beta (129 aa).

The N-terminal stretch at 1–18 (MKTVQFCFLFCCWKAICC) is a signal peptide. Cystine bridges form between cysteine 21/cysteine 69, cysteine 35/cysteine 84, cysteine 38/cysteine 122, cysteine 46/cysteine 100, cysteine 50/cysteine 102, and cysteine 105/cysteine 112. N-linked (GlcNAc...) asparagine glycosylation is found at asparagine 25 and asparagine 42.

Belongs to the glycoprotein hormones subunit beta family. As to quaternary structure, heterodimer. The active follitropin is a heterodimer composed of an alpha chain/CGA shared with other hormones and a unique beta chain/FSHB shown here.

It localises to the secreted. Its function is as follows. Together with the alpha chain CGA constitutes follitropin, the follicle-stimulating hormone, and provides its biological specificity to the hormone heterodimer. Binds FSHR, a G protein-coupled receptor, on target cells to activate downstream signaling pathways. Follitropin is involved in follicle development and spermatogenesis in reproductive organs. This chain is Follitropin subunit beta (FSHB), found in Macaca fascicularis (Crab-eating macaque).